A 116-amino-acid chain; its full sequence is uncharacterized protein (116 aa).

This is an uncharacterized protein from Aquifex aeolicus (strain VF5).